The chain runs to 338 residues: Selenocysteine methyltransferase (338 aa).

The region spanning 1-327 is the Hcy-binding domain; that stretch reads MSSPLITDFL…DTIRGIYKIL (327 aa). Cys-245, Cys-312, and Cys-313 together coordinate Zn(2+).

Monomer. Zn(2+) is required as a cofactor. Present in all tissues tested.

It catalyses the reaction S-methyl-L-methionine + L-selenocysteine = Se-methyl-L-selenocysteine + L-methionine + H(+). In terms of biological role, catalyzes the methylation of selenocysteine with S-methylmethionine as donor. Does not methylate cysteine. This Astragalus bisulcatus (Two-grooved milkvetch) protein is Selenocysteine methyltransferase (SMTA).